The following is a 6781-amino-acid chain: Replicase polyprotein 1ab (6781 aa).

A CoV Nsp1 globular domain is found at 2–109; sequence ASNHVTLAFA…ELELTFGRRG (108 aa). Residues E59, N95, E99, and E102 each coordinate ssDNA. Residues 112 to 364 form the CoV Nsp2 N-terminal domain; sequence IVPVDQYMCG…TKLKFDILSG (253 aa). The CoV Nsp2 middle domain maps to 383-776; sequence SALVDIVDDA…AEMYNTYLST (394 aa). Residues 778-895 enclose the CoV Nsp2 C-terminal domain; that stretch reads VENLVLAGVS…VPICFKKKGG (118 aa). The 96-residue stretch at 896–991 folds into the Ubiquitin-like 1 domain; sequence GDVKFSDEVS…VMVSQWPLND (96 aa). Residues 1009–1040 form a disordered region; the sequence is IDSEGDEVDSSAPEKVADVANSEPGDDGLPVA. Positions 1057–1296 constitute a Peptidase C16 1 domain; it reads SFIKDTPSTV…EPVVKPFYSY (240 aa). The active-site For PL1-PRO activity is C1091. The segment at 1162 to 1193 adopts a C4-type 1; degenerate zinc-finger fold; sequence CGCGTGERIYEGCAFRMTPTLEPFPYGACAQC. Catalysis depends on for PL1-PRO activity residues H1239 and D1252. The region spanning 1297–1465 is the Macro domain; it reads KNVDFYQGDF…IFKEALVDTT (169 aa). One can recognise a Ubiquitin-like 2 domain in the interval 1630-1685; the sequence is NKSVVIKVTEDTRSVKAVKVESTATYGQQIGPCLVNDTVVTDNKPVVADVVAKVVP. One can recognise a Peptidase C16 2 domain in the interval 1691-1951; the sequence is SHYGFDKAGE…LLDTMNYASE (261 aa). C1729 serves as the catalytic For PL2-PRO activity. The C4-type 2; degenerate zinc-finger motif lies at 1808 to 1838; it reads DGCCCSKRVVTAPVVNASVLKLGVEDGLCPH. Active-site for PL2-PRO activity residues include H1888 and D1901. The next 2 helical transmembrane spans lie at 1959 to 1979 and 2022 to 2042; these read FMSR…GLCF and WFKV…LLFM. Residues 1959 to 2170 are HD1; the sequence is FMSRNLITVF…FGDEIVVFFI (212 aa). The 65-residue stretch at 2038–2102 folds into the 3Ecto domain; sequence ALLFMTIRFT…TQVVWQHLRD (65 aa). 2 cysteine pairs are disulfide-bonded: C2054–C2080 and C2072–C2077. A run of 3 helical transmembrane segments spans residues 2105–2125, 2127–2147, and 2150–2170; these read IGNV…GVYV, AITL…LGLQ, and IWFL…VFFI. A Y1 region spans residues 2176–2266; it reads MFIKHVCLGC…VVKLNVQPTG (91 aa). Positions 2176 to 2516 constitute a CoV Nsp3 Y domain; that stretch reads MFIKHVCLGC…PTVCIANKKG (341 aa). Zn(2+)-binding residues include H2180, C2185, C2190, C2193, C2226, H2229, C2233, and C2236. Positions 2180–2193 are ZF1; the sequence is HVCLGCDKASCVAC. Positions 2226–2236 are ZF2; the sequence is CKKHNFFCLNC. The interval 2267–2356 is Y2; sequence PATILIDKVE…LVDSALLASL (90 aa). The segment at 2267–2516 is coV-Y; the sequence is PATILIDKVE…PTVCIANKKG (250 aa). A Y3 region spans residues 2357–2414; the sequence is SVDFGASLHSAFVSVLSNSFGKDLSSCNDMQDCKSTLGFDDVPLDTFNAAVAEAHRYD. The interval 2415-2516 is Y4; it reads VLLTDMSFNN…PTVCIANKKG (102 aa). A run of 7 helical transmembrane segments spans residues 2528 to 2548, 2619 to 2639, 2654 to 2674, 2754 to 2774, 2787 to 2807, 2814 to 2834, and 2863 to 2883; these read FFWF…FLDF, IPAG…TIFG, GACI…TAVY, GSDF…ISVF, ILFN…FTKF, MSVG…SYIV, and LGFL…VYAF. The HD2 stretch occupies residues 2528–2883; it reads FFWFLCLFIV…PWWVLMVYAF (356 aa). The Nsp4C domain maps to 2902 to 2997; the sequence is LFEGDKFVGS…PTVSYNSTLQ (96 aa). In terms of domain architecture, Peptidase C30 spans 2998–3299; that stretch reads AGLRKMAQPS…VRQMYGVNLQ (302 aa). Active-site for 3CL-PRO activity residues include H3038 and C3141. 7 consecutive transmembrane segments (helical) span residues 3336-3356, 3361-3381, 3399-3419, 3431-3451, 3454-3474, 3476-3496, and 3500-3520; these read GYVT…MFTL, LFFQ…NLAF, LMGF…VTIL, PASS…YFYA, ILSC…VGAV, YKVA…FGDI, and MFCY…LYWF. The interval 3336–3520 is HD3; sequence GYVTPMFACL…CCFYGILYWF (185 aa). The RdRp Nsp7 cofactor domain maps to 3580–3662; it reads SKLTDIKCSN…SYFNDNSMLQ (83 aa). The RdRp Nsp8 cofactor domain occupies 3663 to 3857; that stretch reads SVASTYVGLP…LGCERIVKLQ (195 aa). The 108-residue stretch at 3858–3965 folds into the Nsp9 ssRNA-binding domain; the sequence is NNEIIPGKLK…GYIGATVRLQ (108 aa). An ExoN/MTase coactivator domain is found at 3966–4103; the sequence is AGKQTEQAIN…CDRSIMQSTD (138 aa). Zn(2+) contacts are provided by C4039, C4042, H4048, C4055, C4081, C4084, C4092, and C4094. Zinc fingers lie at residues 4039 to 4055 and 4081 to 4094; these read CLYC…DGFC and CKVC…GCTC. The NiRAN domain occupies 4106–4355; the sequence is YLNRVRGSSA…ASECFVKSDI (250 aa). The Nsp12 Interface domain occupies 4361 to 4459; that stretch reads KSYDLLEYDF…WNNDLNLHSS (99 aa). Zn(2+)-binding residues include H4390, C4396, C4401, C4405, and C4582. Positions 4460 to 5027 constitute a Nsp12 RNA-dependent RNA polymerase domain; that stretch reads RLSINELLQF…NMYEKSAVLQ (568 aa). Residues 4462–4676 are rdRp Fingers N-ter; that stretch reads SINELLQFCS…HQKHLKSIVN (215 aa). The interval 4677–4715 is rdRp Palm N-ter; that stretch reads TRGASVVIGTTKFYGGWDNMLKNLIDGVENPCLMGWDYP. The RdRp catalytic domain occupies 4707–4869; it reads PCLMGWDYPK…CYNNDYASLG (163 aa). Residues 4716–4774 form a rdRp Fingers C-ter region; the sequence is KCDRALPNMIRMISAMILGSKHTTCCSSTDRFFRLCNELAQVLTEVVYSNGGFYLKPGG. 3 residues coordinate Zn(2+): H4737, C4740, and C4741. The tract at residues 4775–4910 is rdRp Palm C-ter; sequence TTSGDATTAY…NKGPHEFCSQ (136 aa). Catalysis depends on for RNA-directed RNA polymerase activity residues S4854, D4855, and D4856. Residues 4911–5027 form a rdRp Thumb region; the sequence is HTMQIVDKEG…NMYEKSAVLQ (117 aa). A CV ZBD domain is found at 5028-5140; the sequence is SAGLCVVCGS…EDFNRIATSD (113 aa). C5032, C5035, C5043, C5046, C5053, C5056, H5060, H5066, C5077, C5082, C5099, and H5102 together coordinate Zn(2+). A (+)RNA virus helicase ATP-binding domain is found at 5275 to 5466; sequence STIHKLHPAF…MCALKPDVFL (192 aa). 5310–5317 is a binding site for ATP; that stretch reads GPPGSGKS. A (+)RNA virus helicase C-terminal domain is found at 5467 to 5636; the sequence is HKCYRCPAEI…EGCGLFKDCS (170 aa). The ExoN domain occupies 5696–5910; that stretch reads LFCTRDFAMR…RCLAIHDCFV (215 aa). Active-site for exoribonuclease activity residues include D5714, E5716, and E5815. Residues C5831, C5833, C5849, H5852, H5880, C5884, and H5887 each contribute to the Zn(2+) site. Residues H5891 and D5896 each act as for exoribonuclease activity in the active site. C5902 provides a ligand contact to Zn(2+). Positions 5919–6140 constitute an N7-MTase domain; it reads YPFIGNEAVI…NLWQTFSNNL (222 aa). 5954–5960 serves as a coordination point for S-adenosyl-L-methionine; sequence DIGNPKG. Residues 6031–6045 form a gpppA-binding region; sequence CNGGSLYVNNHAFHT. Residues C6069, C6086, C6097, and H6100 each contribute to the Zn(2+) site. One can recognise a Nsp15 N-terminal oligomerization domain in the interval 6142–6202; sequence GLENIAFNVL…NVAFELYAKR (61 aa). The 118-residue stretch at 6203-6320 folds into the AV-Nsp11N/CoV-Nsp15M domain; it reads KVGLTPPITI…IYTRKNGKFE (118 aa). Positions 6337–6477 constitute a NendoU domain; sequence SPRSDMEKDF…KDHKLQTFYP (141 aa). Catalysis depends on for uridylate-specific endoribonuclease activity residues H6367, H6382, and K6423. A Nidovirus-type SAM-dependent 2'-O-MTase domain is found at 6481–6777; the sequence is ASEWKCGYSM…AICGFSNHLV (297 aa). Residues K6525, D6609, K6649, and E6682 each act as for 2'-O-methyltransferase in the active site.

This sequence belongs to the coronaviruses polyprotein 1ab family. Interacts with PL-PRO and nsp6. As to quaternary structure, monomer. Homodimer; disulfide-linked. In terms of assembly, interacts with nsp8 and nsp12 to form the replication-transcription complex (RTC): nsp12, nsp7, two subunits of nsp8, and up to two subunits of nsp13. Eight copies of nsp7 and eight copies of nsp8 assemble to form a heterohexadecamer dsRNA-encircling ring structure. Interacts with nsp7, nsp13 and nsp12 to form the replication-transcription complex (RTC): nsp12, nsp7, two subunits of nsp8, and up to two subunits of nsp13. Eight copies of nsp7 and eight copies of nsp8 assemble to form a heterohexadecamer dsRNA-encircling ring structure. As to quaternary structure, homodimer. In terms of assembly, forms a dodecamer and interacts with nsp14 and nsp16; these interactions enhance nsp14 and nsp16 enzymatic activities. Requires Mn(2+) as cofactor. Post-translationally, specific enzymatic cleavages in vivo by its own proteases yield mature proteins. 3CL-PRO and PL-PRO proteinases are autocatalytically processed.

The protein resides in the host cytoplasm. Its subcellular location is the host nucleus. It localises to the host membrane. The protein localises to the host perinuclear region. It is found in the host endoplasmic reticulum. The protein resides in the host endoplasmic reticulum-Golgi intermediate compartment. It catalyses the reaction Thiol-dependent hydrolysis of ester, thioester, amide, peptide and isopeptide bonds formed by the C-terminal Gly of ubiquitin (a 76-residue protein attached to proteins as an intracellular targeting signal).. The enzyme catalyses a 5'-end diphospho-ribonucleoside in mRNA + GTP + H(+) = a 5'-end (5'-triphosphoguanosine)-ribonucleoside in mRNA + diphosphate. It carries out the reaction RNA(n) + a ribonucleoside 5'-triphosphate = RNA(n+1) + diphosphate. The catalysed reaction is ATP + H2O = ADP + phosphate + H(+). It catalyses the reaction a 5'-end (5'-triphosphoguanosine)-ribonucleoside in mRNA + S-adenosyl-L-methionine = a 5'-end (N(7)-methyl 5'-triphosphoguanosine)-ribonucleoside in mRNA + S-adenosyl-L-homocysteine. The enzyme catalyses uridylyl-uridylyl-ribonucleotide-RNA = a 3'-end uridylyl-2',3'-cyclophospho-uridine-RNA + a 5'-end dephospho-ribonucleoside-RNA. It carries out the reaction a 5'-end (N(7)-methyl 5'-triphosphoguanosine)-ribonucleoside in mRNA + S-adenosyl-L-methionine = a 5'-end (N(7)-methyl 5'-triphosphoguanosine)-(2'-O-methyl-ribonucleoside) in mRNA + S-adenosyl-L-homocysteine + H(+). Its activity is regulated as follows. Inhibited by the substrate-analog Cbz-Val-Asn-Ser-Thr-Leu-Gln-CMK. Inhibited by (R)-16. Functionally, multifunctional protein responsible for the transcription of negative stranded RNA, leader RNA, subgenomic mRNAs and progeny virion RNA as well as proteinases responsible for the cleavage of the polyprotein into functional products. In terms of biological role, plays a role in the inhibition of host interferon and pro-inflammatory cytokines production. Suppresses host RELA/p65 activation by blocking NFKBIA phosphorylation. Targets also the RLR pathway downstream of the IRF3 activation by targeting host CREBBP to proteasomal degradation. Responsible for the cleavages located at the N-terminus of the replicase polyprotein. Participates together with nsp4 in the assembly of virally-induced cytoplasmic double-membrane vesicles necessary for viral replication. Forms a molecular pore spanning the double membrane of the coronavirus replication organelle. In addition, PLP2 possesses a deubiquitinating/deISGylating activity and processes both 'Lys-48'- and 'Lys-63'-linked polyubiquitin chains from cellular substrates. PLP2 also antagonizes innate immune induction of type I interferon by blocking the nuclear translocation of host IRF-3. Participates in the inhibition of the integrated stress response (ISR) in the infected host cell. Its function is as follows. Participates in the assembly of virally-induced cytoplasmic double-membrane vesicles necessary for viral replication. Functionally, responsible for the majority of cleavages as it cleaves the C-terminus of replicase polyprotein at 11 sites. Recognizes substrates containing the core sequence [ILMVF]-Q-|-[SGACN]. Also contains an ADP-ribose-1''-phosphate (ADRP)-binding function. Participates in the inhibition of the integrated stress response (ISR) in the infected host cell. In terms of biological role, plays a role in the initial induction of autophagosomes from host endoplasmic reticulum. Later, limits the expansion of these phagosomes that are no longer able to deliver viral components to lysosomes. Plays a role in viral RNA synthesis. Forms a hexadecamer with nsp8 (8 subunits of each) that may participate in viral replication by acting as a primase. Alternatively, may synthesize substantially longer products than oligonucleotide primers. Its function is as follows. Plays a role in viral RNA synthesis. Forms a hexadecamer with nsp7 (8 subunits of each) that may participate in viral replication by acting as a primase. Alternatively, may synthesize substantially longer products than oligonucleotide primers. Functionally, forms a primer, NSP9-pU, which is utilized by the polymerase for the initiation of RNA chains. Interacts with ribosome signal recognition particle RNA (SRP). Together with NSP8, suppress protein integration into the cell membrane, thereby disrupting host immune defenses. In terms of biological role, plays a pivotal role in viral transcription by stimulating both nsp14 3'-5' exoribonuclease and nsp16 2'-O-methyltransferase activities. Therefore plays an essential role in viral mRNAs cap methylation. RNA-directed RNA polymerase that catalyzes the transcription of viral genomic and subgenomic RNAs. Acts in complex with nsp7 and nsp8 to transcribe both the minus and positive strands of genomic RNA. The kinase-like NiRAN domain of NSP12 attaches one or more nucleotides to the amino terminus of NSP9, forming a covalent RNA-protein intermediate that serves as transcription/replication primer. Subgenomic RNAs (sgRNAs) are formed by discontinuous transcription: The polymerase has the ability to pause at transcription-regulating sequences (TRS) and jump to the leader TRS, resulting in a major deletion. This creates a series of subgenomic RNAs that are replicated, transcribed and translated. In addition, Nsp12 is a subunit of the viral RNA capping enzyme that catalyzes the RNA guanylyltransferase reaction for genomic and sub-genomic RNAs. Subsequently, the NiRAN domain transfers RNA to GDP, and forms the core cap structure GpppA-RNA. Its function is as follows. Plays a role in viral RNA synthesis. Multi-functional protein with a zinc-binding domain in N-terminus displaying RNA and DNA duplex-unwinding activities with 5' to 3' polarity. ATPase activity is strongly stimulated by poly(U), poly(dT), poly(C), poly(dA), but not by poly(G). Functionally, plays a role in viral RNA synthesis through two distinct activities. The N7-guanine methyltransferase activity plays a role in the formation of the cap structure GpppA-RNA. The proofreading exoribonuclease reduces the sensitivity of the virus to RNA mutagens during replication. This activity acts on both ssRNA and dsRNA in a 3'-5' direction. In terms of biological role, plays a role in viral transcription/replication and prevents the simultaneous activation of host cell dsRNA sensors, such as MDA5/IFIH1, OAS, and PKR. Acts by degrading the 5'-polyuridines generated during replication of the poly(A) region of viral genomic and subgenomic RNAs. Catalyzes a two-step reaction in which a 2'3'-cyclic phosphate (2'3'-cP) is first generated by 2'-O transesterification, which is then hydrolyzed to a 3'-phosphate (3'-P). If not degraded, poly(U) RNA would hybridize with poly(A) RNA tails and activate host dsRNA sensors. Decreases the RNA levels and thus the expression of host TBK1 and IRF3, antagonizing the host innate response. This Sus scrofa (Pig) protein is Replicase polyprotein 1ab (rep).